A 264-amino-acid chain; its full sequence is tRNA pseudouridine synthase A (264 aa).

The active-site Nucleophile is Asp51. Tyr109 is a substrate binding site.

The protein belongs to the tRNA pseudouridine synthase TruA family. As to quaternary structure, homodimer.

It carries out the reaction uridine(38/39/40) in tRNA = pseudouridine(38/39/40) in tRNA. In terms of biological role, formation of pseudouridine at positions 38, 39 and 40 in the anticodon stem and loop of transfer RNAs. This chain is tRNA pseudouridine synthase A, found in Aromatoleum aromaticum (strain DSM 19018 / LMG 30748 / EbN1) (Azoarcus sp. (strain EbN1)).